We begin with the raw amino-acid sequence, 177 residues long: Large ribosomal subunit protein uL5m (177 aa).

The protein belongs to the universal ribosomal protein uL5 family.

The protein localises to the mitochondrion. The sequence is that of Large ribosomal subunit protein uL5m (RPL5) from Acanthamoeba castellanii (Amoeba).